The following is a 61-amino-acid chain: Metallothionein-1E (61 aa).

An N-acetylmethionine modification is found at Met-1. The interval Met-1–Cys-29 is beta. The a divalent metal cation site is built by Cys-5, Cys-7, Cys-13, Cys-15, Cys-19, Cys-21, Cys-24, Cys-26, Cys-29, Cys-33, Cys-34, Cys-36, Cys-37, Cys-41, Cys-44, Cys-48, Cys-50, Cys-57, Cys-59, and Cys-60. The tract at residues Lys-30–Ala-61 is alpha.

The protein belongs to the metallothionein superfamily. Type 1 family. In terms of assembly, monomer.

In terms of biological role, metallothioneins have a high content of cysteine residues that bind various heavy metals; these proteins are transcriptionally regulated by both heavy metals and glucocorticoids. This Sus scrofa (Pig) protein is Metallothionein-1E (MT1E).